We begin with the raw amino-acid sequence, 443 residues long: Glutamyl-tRNA reductase (443 aa).

Substrate contacts are provided by residues 55-58, serine 113, 118-120, and glutamine 124; these read TCNR and EPQ. Residue cysteine 56 is the Nucleophile of the active site. 193 to 198 contributes to the NADP(+) binding site; the sequence is GAGEMI.

Belongs to the glutamyl-tRNA reductase family. Homodimer.

It catalyses the reaction (S)-4-amino-5-oxopentanoate + tRNA(Glu) + NADP(+) = L-glutamyl-tRNA(Glu) + NADPH + H(+). It participates in porphyrin-containing compound metabolism; protoporphyrin-IX biosynthesis; 5-aminolevulinate from L-glutamyl-tRNA(Glu): step 1/2. It functions in the pathway porphyrin-containing compound metabolism; chlorophyll biosynthesis. Functionally, catalyzes the NADPH-dependent reduction of glutamyl-tRNA(Glu) to glutamate 1-semialdehyde (GSA). This Methylibium petroleiphilum (strain ATCC BAA-1232 / LMG 22953 / PM1) protein is Glutamyl-tRNA reductase.